A 531-amino-acid chain; its full sequence is tRNA-2-methylthio-N(6)-dimethylallyladenosine synthase (531 aa).

The interval 1-26 is disordered; it reads MNEKQRLEQTGQIKTESHPADRKSAL. Residues 15 to 26 are compositionally biased toward basic and acidic residues; it reads TESHPADRKSAL. The region spanning 80–198 is the MTTase N-terminal domain; it reads RKFYIRTYGC…LPYILHEAYM (119 aa). [4Fe-4S] cluster contacts are provided by C89, C125, C159, C235, C239, and C242. Residues 221-451 form the Radical SAM core domain; that stretch reads RKGKIKAWVN…NDLVQEIAAK (231 aa). Positions 454–517 constitute a TRAM domain; sequence KQYEGQVVEV…TWTLTGELVN (64 aa).

The protein belongs to the methylthiotransferase family. MiaB subfamily. In terms of assembly, monomer. [4Fe-4S] cluster serves as cofactor.

It is found in the cytoplasm. The enzyme catalyses N(6)-dimethylallyladenosine(37) in tRNA + (sulfur carrier)-SH + AH2 + 2 S-adenosyl-L-methionine = 2-methylsulfanyl-N(6)-dimethylallyladenosine(37) in tRNA + (sulfur carrier)-H + 5'-deoxyadenosine + L-methionine + A + S-adenosyl-L-homocysteine + 2 H(+). Its function is as follows. Catalyzes the methylthiolation of N6-(dimethylallyl)adenosine (i(6)A), leading to the formation of 2-methylthio-N6-(dimethylallyl)adenosine (ms(2)i(6)A) at position 37 in tRNAs that read codons beginning with uridine. In Geobacillus kaustophilus (strain HTA426), this protein is tRNA-2-methylthio-N(6)-dimethylallyladenosine synthase.